We begin with the raw amino-acid sequence, 613 residues long: MPKYRSATTTHGRNMAGARALWRATGVKDEDFGKPIIAVVNSFTQFVPGHVHLKDLGQLVAREIEAAGGIAKEFNTIAVDDGIAMGHGGMLYSLPSRELIADSVEYMVNAHCADAMVCISNCDKITPGMLMASMRLNIPVIFVSGGPMEAGKTKLSDQIIKLDLVDAMIQGADPKVSDEQSEQIERSACPTCGSCSGMFTANSMNCLTEALGLSQPGNGSLLATHADRKQLFISAGQRIVELTKRYYEQDDESALPRNIATKAAFENAMALDIAMGGSTNTVLHLLAAAQEGEVDFDMTDIDRMSRMVPHLCKVAPSTQKYHMEDVHRAGGVVGILGELNRAGLLHNQSKTVLGLTWEEQLAQYDIMLTDSEEVKRFYRAGPAGIRTTQAFSQDCRWDTLDDDRAQGCIRTKENAFSQDGGLAVLKGNIALDGCIVKTAGVDESILKFTGPAVVFESQEDAVEGILGGKVKAGDVVVIRYEGPKGGPGMQEMLYPTTYLKSMGLGKACALLTDGRFSGGTSGLSIGHASPEAANGGAIGLVKQGDLIAIDIPNRTISLQVSDQEMAERRAEQDALGWKPVSRQREVSFALKAYASMATSADKGAVRDKSKLEG.

Residue D81 participates in Mg(2+) binding. C122 contacts [2Fe-2S] cluster. Positions 123 and 124 each coordinate Mg(2+). N6-carboxylysine is present on K124. C195 provides a ligand contact to [2Fe-2S] cluster. A Mg(2+)-binding site is contributed by E491. S517 serves as the catalytic Proton acceptor.

It belongs to the IlvD/Edd family. As to quaternary structure, homodimer. [2Fe-2S] cluster serves as cofactor. The cofactor is Mg(2+).

The enzyme catalyses (2R)-2,3-dihydroxy-3-methylbutanoate = 3-methyl-2-oxobutanoate + H2O. It carries out the reaction (2R,3R)-2,3-dihydroxy-3-methylpentanoate = (S)-3-methyl-2-oxopentanoate + H2O. Its pathway is amino-acid biosynthesis; L-isoleucine biosynthesis; L-isoleucine from 2-oxobutanoate: step 3/4. It participates in amino-acid biosynthesis; L-valine biosynthesis; L-valine from pyruvate: step 3/4. In terms of biological role, functions in the biosynthesis of branched-chain amino acids. Catalyzes the dehydration of (2R,3R)-2,3-dihydroxy-3-methylpentanoate (2,3-dihydroxy-3-methylvalerate) into 2-oxo-3-methylpentanoate (2-oxo-3-methylvalerate) and of (2R)-2,3-dihydroxy-3-methylbutanoate (2,3-dihydroxyisovalerate) into 2-oxo-3-methylbutanoate (2-oxoisovalerate), the penultimate precursor to L-isoleucine and L-valine, respectively. This is Dihydroxy-acid dehydratase from Vibrio vulnificus (strain CMCP6).